Reading from the N-terminus, the 202-residue chain is Small ribosomal subunit protein uS4c (202 aa).

The S4 RNA-binding domain maps to Met-90–Lys-158.

It belongs to the universal ribosomal protein uS4 family. Part of the 30S ribosomal subunit. Contacts protein S5. The interaction surface between S4 and S5 is involved in control of translational fidelity.

It localises to the plastid. Its subcellular location is the chloroplast. Its function is as follows. One of the primary rRNA binding proteins, it binds directly to 16S rRNA where it nucleates assembly of the body of the 30S subunit. With S5 and S12 plays an important role in translational accuracy. The sequence is that of Small ribosomal subunit protein uS4c (rps4) from Marchantia romanica (Liverwort).